The following is a 236-amino-acid chain: Thiol:disulfide interchange protein DsbC (236 aa).

The N-terminal stretch at 1–20 is a signal peptide; the sequence is MKKGFMLFTLLAAFSGFAQA. Residues 36 to 231 enclose the Thioredoxin domain; the sequence is SSDIQPAPVA…MKEFLDEHQK (196 aa). Disulfide bonds link C118–C121 and C161–C183.

Belongs to the thioredoxin family. DsbC subfamily. In terms of assembly, homodimer.

The protein localises to the periplasm. Required for disulfide bond formation in some periplasmic proteins. Acts by transferring its disulfide bond to other proteins and is reduced in the process. DsbC is reoxidized by a yet uncharacterized protein. Also acts as a disulfide isomerase. In Escherichia coli O157:H7, this protein is Thiol:disulfide interchange protein DsbC (dsbC).